Consider the following 229-residue polypeptide: Probable endo-1,4-beta-xylanase A (229 aa).

The first 18 residues, 1–18 (MVSFKYLFLAASALGALA), serve as a signal peptide directing secretion. Residues Asn-30 and Asn-100 are each glycosylated (N-linked (GlcNAc...) asparagine). A GH11 domain is found at 41–229 (AGTPSSTGWN…SSGSSSITVY (189 aa)). Catalysis depends on Glu-125, which acts as the Nucleophile. The Proton donor role is filled by Glu-216.

This sequence belongs to the glycosyl hydrolase 11 (cellulase G) family.

The protein localises to the secreted. The catalysed reaction is Endohydrolysis of (1-&gt;4)-beta-D-xylosidic linkages in xylans.. Its pathway is glycan degradation; xylan degradation. Its function is as follows. Endo-1,4-beta-xylanase involved in the hydrolysis of xylan, a major structural heterogeneous polysaccharide found in plant biomass representing the second most abundant polysaccharide in the biosphere, after cellulose. The chain is Probable endo-1,4-beta-xylanase A (xlnA) from Aspergillus clavatus (strain ATCC 1007 / CBS 513.65 / DSM 816 / NCTC 3887 / NRRL 1 / QM 1276 / 107).